The chain runs to 184 residues: MSQSAVSKRYAAALFDIALESKLVNEIEEELTVVKKIFIEHKDLNAVLGHPKVPAEKKKQILKDSFGSVSTAVLHTLYLLVDRSRTSIVPDLADEYVKMANRFRGTEDAIVYSVKPLSEEEISSFSQVFAKEAGAASLRVRNEVNPDLIGGVKIRIGNRIYDGSVRGKLDRIERQLAGENRKKG.

It belongs to the ATPase delta chain family. As to quaternary structure, F-type ATPases have 2 components, F(1) - the catalytic core - and F(0) - the membrane proton channel. F(1) has five subunits: alpha(3), beta(3), gamma(1), delta(1), epsilon(1). F(0) has three main subunits: a(1), b(2) and c(10-14). The alpha and beta chains form an alternating ring which encloses part of the gamma chain. F(1) is attached to F(0) by a central stalk formed by the gamma and epsilon chains, while a peripheral stalk is formed by the delta and b chains.

The protein localises to the cell membrane. Its function is as follows. F(1)F(0) ATP synthase produces ATP from ADP in the presence of a proton or sodium gradient. F-type ATPases consist of two structural domains, F(1) containing the extramembraneous catalytic core and F(0) containing the membrane proton channel, linked together by a central stalk and a peripheral stalk. During catalysis, ATP synthesis in the catalytic domain of F(1) is coupled via a rotary mechanism of the central stalk subunits to proton translocation. This protein is part of the stalk that links CF(0) to CF(1). It either transmits conformational changes from CF(0) to CF(1) or is implicated in proton conduction. This is ATP synthase subunit delta from Bacillus licheniformis (strain ATCC 14580 / DSM 13 / JCM 2505 / CCUG 7422 / NBRC 12200 / NCIMB 9375 / NCTC 10341 / NRRL NRS-1264 / Gibson 46).